The sequence spans 490 residues: Interferon-induced protein with tetratricopeptide repeats 3 (490 aa).

8 TPR repeats span residues 51–84 (ATMY…IQQE), 94–127 (LVTW…CKKF), 136–169 (SELD…KPNN), 172–206 (FSSG…SPDN), 207–240 (QYVK…SPCQ), 241–274 (TDVL…TPNN), 415–448 (PNYW…LLRD), and 450–481 (PSGI…SPRE). Residues serine 203 and serine 237 each carry the phosphoserine modification. The tract at residues 467-490 (SEEMGQGAVSSSPRELLSNSEQLN) is disordered. Over residues 474–490 (AVSSSPRELLSNSEQLN) the composition is skewed to polar residues. A Phosphoserine modification is found at serine 478.

This sequence belongs to the IFIT family. As to quaternary structure, component of an interferon-dependent multiprotein complex, at least composed of IFIT1, IFIT2 and IFIT3. Interacts with IFIT1 and IFIT2. Interacts (via N-terminus) with MAVS, TBK1, TRAF6 and RIGI. Interacts with COPS5. Expression significantly higher in peripheral blood mononuclear cells (PBMCs) and monocytes from systemic lupus erythematosus (SLE) patients than in those from healthy individuals (at protein level). Spleen, lung, leukocytes, lymph nodes, placenta, bone marrow and fetal liver.

The protein resides in the cytoplasm. Its subcellular location is the mitochondrion. Functionally, IFN-induced antiviral protein which acts as an inhibitor of cellular as well as viral processes, cell migration, proliferation, signaling, and viral replication. Enhances MAVS-mediated host antiviral responses by serving as an adapter bridging TBK1 to MAVS which leads to the activation of TBK1 and phosphorylation of IRF3 and phosphorylated IRF3 translocates into nucleus to promote antiviral gene transcription. Exhibits an antiproliferative activity via the up-regulation of cell cycle negative regulators CDKN1A/p21 and CDKN1B/p27. Normally, CDKN1B/p27 turnover is regulated by COPS5, which binds CDKN1B/p27 in the nucleus and exports it to the cytoplasm for ubiquitin-dependent degradation. IFIT3 sequesters COPS5 in the cytoplasm, thereby increasing nuclear CDKN1B/p27 protein levels. Up-regulates CDKN1A/p21 by down-regulating MYC, a repressor of CDKN1A/p21. Can negatively regulate the apoptotic effects of IFIT2. The protein is Interferon-induced protein with tetratricopeptide repeats 3 (IFIT3) of Homo sapiens (Human).